A 1127-amino-acid polypeptide reads, in one-letter code: Glutamate receptor-interacting protein 1 (1127 aa).

The S-palmitoyl cysteine moiety is linked to residue Gln-11. Ser-43 carries the post-translational modification Phosphoserine. PDZ domains follow at residues 53-136 (VVEL…EYEL), 150-238 (TVEV…EYDV), 252-336 (LVEV…LPHH), 471-560 (EVVL…EFDV), 572-657 (HVKL…RKDE), and 672-754 (TVEL…KKQT). Disordered regions lie at residues 752–802 (KQTD…PSVD), 840–865 (KQRTSLSPVPKPRSQTYPDVGLSNED), and 942–980 (MARSQLGRQASFQERSSSRPHYSQTTRSNTLPSDVGRKS). Composition is skewed to polar residues over residues 840–856 (KQRTSLSPVPKPRSQTY) and 947–973 (LGRQASFQERSSSRPHYSQTTRSNTLP). The region spanning 1003–1085 (KVTLYKDSGM…KLDLVISRNP (83 aa)) is the PDZ 7 domain. Residues 1108-1127 (FFQQPSHGGNLETREPTNTL) are disordered.

As to quaternary structure, interacts with EFNB3, GRIA2, GRIA3, GRIPAP1/GRASP1, PPFIA1, PPFIA4, FRAS1, PTPRF, liprins-alpha and the C-terminal tail of PRLHR. Can form homomultimers or heteromultimers with GRIP2. Interacts with EFNB1, EPHA7, EPHB2, KIF5A, KIF5B and KIF5C. Forms a ternary complex with GRIA2 and CSPG4. Interacts with ATAD1 in an ATP-dependent manner. ATAD1-catalyzed ATP hydrolysis disrupts binding to ATAD1 and to GRIA2 and leads to AMPAR complex disassembly. Interacts with SLC30A9 and PLCD4. Interacts with BUD23. Forms a complex with NSG1, GRIA2 and STX12; controls the intracellular fate of AMPAR and the endosomal sorting of the GRIA2 subunit toward recycling and membrane targeting. Interacts with NSG1. Palmitoylation of isoform 2. Expressed in brain. Isoform 2 is the major isoform in brain. Expressed in oligodendrocyte lineage cells.

The protein localises to the membrane. Its subcellular location is the cytoplasmic vesicle. It localises to the perikaryon. The protein resides in the cell projection. It is found in the dendrite. The protein localises to the cytoplasm. Its subcellular location is the endomembrane system. It localises to the postsynaptic cell membrane. The protein resides in the postsynaptic density. It is found in the endoplasmic reticulum membrane. Functionally, may play a role as a localized scaffold for the assembly of a multiprotein signaling complex and as mediator of the trafficking of its binding partners at specific subcellular location in neurons. Through complex formation with NSG1, GRIA2 and STX12 controls the intracellular fate of AMPAR and the endosomal sorting of the GRIA2 subunit toward recycling and membrane targeting. This Mus musculus (Mouse) protein is Glutamate receptor-interacting protein 1 (Grip1).